The sequence spans 251 residues: 3-dehydroquinate dehydratase (251 aa).

Residues 47-49 (EWR) and Arg83 each bind 3-dehydroquinate. Catalysis depends on His144, which acts as the Proton donor/acceptor. Lys171 functions as the Schiff-base intermediate with substrate in the catalytic mechanism. 3 residues coordinate 3-dehydroquinate: Arg214, Ser233, and Gln237.

Belongs to the type-I 3-dehydroquinase family. As to quaternary structure, homodimer.

The enzyme catalyses 3-dehydroquinate = 3-dehydroshikimate + H2O. It functions in the pathway metabolic intermediate biosynthesis; chorismate biosynthesis; chorismate from D-erythrose 4-phosphate and phosphoenolpyruvate: step 3/7. Its function is as follows. Involved in the third step of the chorismate pathway, which leads to the biosynthesis of aromatic amino acids. Catalyzes the cis-dehydration of 3-dehydroquinate (DHQ) and introduces the first double bond of the aromatic ring to yield 3-dehydroshikimate. This chain is 3-dehydroquinate dehydratase, found in Klebsiella pneumoniae subsp. pneumoniae (strain ATCC 700721 / MGH 78578).